A 333-amino-acid chain; its full sequence is MKFIDEATITVSSGKGGRGCVSFRRERFVPRGGPDGGDGGSGGSLLFRVNPSKRTLYAFRSKKQFAAPNGAPGEGRQKTGKSGDDLVIEVPPGTLIFDADTGAIIRDMVSPEEDFVFLTGGRGGKGNKHFATSTHQTPRFAQPGEPAQTATVRLELKLLADVGLIGLPNAGKSTLLSVISAARPAIGAYPFTTLSPNLGMVTLAGAEPFAVADIPGLIEGAHTGAGLGIRFLKHIERTRLLVHLIDASAIDPADPVAPFRIINAELAMFSPALAERPQVVVLNKMDLTGAEALAQQFINAAGIKKCFLISAATRSGVEELKKHLFELLCSHDT.

An Obg domain is found at methionine 1 to leucine 159. The disordered stretch occupies residues lysine 63 to aspartate 85. A compositionally biased stretch (basic and acidic residues) spans glycine 75 to aspartate 84. Residues alanine 160–cysteine 329 enclose the OBG-type G domain. Residues glycine 166–serine 173, phenylalanine 191–serine 195, aspartate 213–glycine 216, asparagine 283–aspartate 286, and serine 310–alanine 312 each bind GTP. Mg(2+) is bound by residues serine 173 and threonine 193.

The protein belongs to the TRAFAC class OBG-HflX-like GTPase superfamily. OBG GTPase family. In terms of assembly, monomer. Mg(2+) is required as a cofactor.

Its subcellular location is the cytoplasm. An essential GTPase which binds GTP, GDP and possibly (p)ppGpp with moderate affinity, with high nucleotide exchange rates and a fairly low GTP hydrolysis rate. Plays a role in control of the cell cycle, stress response, ribosome biogenesis and in those bacteria that undergo differentiation, in morphogenesis control. This chain is GTPase Obg, found in Desulfosudis oleivorans (strain DSM 6200 / JCM 39069 / Hxd3) (Desulfococcus oleovorans).